Consider the following 276-residue polypeptide: Extracellular metalloprotease VDBG_07883 (276 aa).

An N-terminal signal peptide occupies residues 1–17 (MQSKFLWIAAASAATAA). N-linked (GlcNAc...) asparagine glycosylation is found at N70 and N102. H191 contributes to the Zn(2+) binding site. The active site involves E192. H195 serves as a coordination point for Zn(2+). N-linked (GlcNAc...) asparagine glycosylation occurs at N222. A disulfide bridge links C227 with C254.

It belongs to the peptidase M43B family.

It is found in the secreted. Its function is as follows. Secreted metalloproteinase that allows assimilation of proteinaceous substrates. The sequence is that of Extracellular metalloprotease VDBG_07883 from Verticillium alfalfae (strain VaMs.102 / ATCC MYA-4576 / FGSC 10136) (Verticillium wilt of alfalfa).